Consider the following 167-residue polypeptide: CGG triplet repeat-binding protein 1 (167 aa).

Serine 56 is modified (phosphoserine). The Nuclear localization signal motif lies at 80-84 (RKKQR). Position 164 is a phosphoserine (serine 164).

In terms of tissue distribution, ubiquitous. Highly expressed in placenta, thymus, lymph nodes, cerebellum and cerebral cortex. Low expression in other regions of the brain.

The protein resides in the nucleus. Its function is as follows. Binds to nonmethylated 5'-d(CGG)(n)-3' trinucleotide repeats in the FMR1 promoter. May play a role in regulating FMR1 promoter. The protein is CGG triplet repeat-binding protein 1 (CGGBP1) of Homo sapiens (Human).